A 364-amino-acid polypeptide reads, in one-letter code: Cobalt-precorrin-5B C(1)-methyltransferase (364 aa).

This sequence belongs to the CbiD family.

The catalysed reaction is Co-precorrin-5B + S-adenosyl-L-methionine = Co-precorrin-6A + S-adenosyl-L-homocysteine. The protein operates within cofactor biosynthesis; adenosylcobalamin biosynthesis; cob(II)yrinate a,c-diamide from sirohydrochlorin (anaerobic route): step 6/10. In terms of biological role, catalyzes the methylation of C-1 in cobalt-precorrin-5B to form cobalt-precorrin-6A. The chain is Cobalt-precorrin-5B C(1)-methyltransferase from Pseudomonas entomophila (strain L48).